We begin with the raw amino-acid sequence, 288 residues long: Glycine--tRNA ligase alpha subunit (288 aa).

This sequence belongs to the class-II aminoacyl-tRNA synthetase family. As to quaternary structure, tetramer of two alpha and two beta subunits.

The protein localises to the cytoplasm. The catalysed reaction is tRNA(Gly) + glycine + ATP = glycyl-tRNA(Gly) + AMP + diphosphate. In Rickettsia africae (strain ESF-5), this protein is Glycine--tRNA ligase alpha subunit.